We begin with the raw amino-acid sequence, 132 residues long: Phosphomevalonate dehydratase small subunit (132 aa).

The active-site Proton acceptor is the Ser58.

This sequence belongs to the AcnX type II small subunit family. Heterodimer composed of a large subunit (PMDh-L) and a small subunit (PMDh-S).

It carries out the reaction (R)-5-phosphomevalonate = (2E)-3-methyl-5-phosphooxypent-2-enoate + H2O. Its pathway is isoprenoid biosynthesis; isopentenyl diphosphate biosynthesis via mevalonate pathway. With respect to regulation, neither the addition of 1 mM Mg(2+) nor 1 mM Mn(2+) has a significant effect on the activity, whereas Zn(2+) causes almost complete inactivation. Strongly inhibited by H(2)O(2), but not by EDTA or iodoacetamide. Component of a hydro-lyase that catalyzes the dehydration of mevalonate 5-phosphate (MVA5P) to form trans-anhydromevalonate 5-phosphate (tAHMP). Involved in the archaeal mevalonate (MVA) pathway, which provides fundamental precursors for isoprenoid biosynthesis, such as isopentenyl diphosphate (IPP) and dimethylallyl diphosphate (DMAPP). This chain is Phosphomevalonate dehydratase small subunit, found in Aeropyrum pernix (strain ATCC 700893 / DSM 11879 / JCM 9820 / NBRC 100138 / K1).